A 323-amino-acid chain; its full sequence is Arginase, hepatic (323 aa).

Histidine 102, aspartate 125, histidine 127, and aspartate 129 together coordinate Mn(2+). Residues 127-131 (HADIN), 138-140 (SGN), and aspartate 184 each bind substrate. Mn(2+) is bound by residues aspartate 233 and aspartate 235. Threonine 247 and glutamate 278 together coordinate substrate.

It belongs to the arginase family. In terms of assembly, homotrimer. Mn(2+) serves as cofactor.

The enzyme catalyses L-arginine + H2O = urea + L-ornithine. It functions in the pathway nitrogen metabolism; urea cycle; L-ornithine and urea from L-arginine: step 1/1. This Aquarana catesbeiana (American bullfrog) protein is Arginase, hepatic.